We begin with the raw amino-acid sequence, 337 residues long: MTAAFSTLDEVRDILRALPESDAESIDDAAARNGQLTKPPGALGRLEALAIWYAGWRGVATPRIETPQIIVFAGNHGIAAQGVSAFPAEVTAQMVLNFQHGGAAINQLAATFGAKLDVHALALEQPTADFTQAPAMSEAEVIDALHTGWQAVDAAADVLIVGEMGIGNTTCAAALAAACFGGAPADWVGRGTGVDDAGLAIKQRVVAEGLARHATVHDGLEKLRCLGGREVAAMAGAILRARVLRIPVLLDGFICCAAAGSLMHTAPDALEHCVAGHLSAEGSHDRLLQAIGKPPLLSLGLRLGEASGAALSLAVLQGAVACLSGMATFAEAGVADG.

Residue glutamate 305 is the Proton acceptor of the active site.

The protein belongs to the CobT family.

The enzyme catalyses 5,6-dimethylbenzimidazole + nicotinate beta-D-ribonucleotide = alpha-ribazole 5'-phosphate + nicotinate + H(+). Its pathway is nucleoside biosynthesis; alpha-ribazole biosynthesis; alpha-ribazole from 5,6-dimethylbenzimidazole: step 1/2. Functionally, catalyzes the synthesis of alpha-ribazole-5'-phosphate from nicotinate mononucleotide (NAMN) and 5,6-dimethylbenzimidazole (DMB). This Roseobacter denitrificans (strain ATCC 33942 / OCh 114) (Erythrobacter sp. (strain OCh 114)) protein is Nicotinate-nucleotide--dimethylbenzimidazole phosphoribosyltransferase.